A 340-amino-acid chain; its full sequence is MTDHALLLVNLGSPASTQVADVRSYLNQFLMDPYVIDLPWPVRRLLVSLILIKRPEQSAHAYASIWWDEGSPLVVLSKRLQQAMKKEWSHGPVELAMRYGEPSIETVLTRLAEQGFKKVTLAPLYPQFADSTVTTVIEEAKRVVRAKSLKMQFSVLQPFYDQPEYLSALVESVRPHLEQPYDHLLLSFHGLPERHLHKLDPTGKHCLKDDCCMTAPAEVLATCYRAQCIQSAAAFAKRMGIADGKWSVSFQSRLGRAKWIEPYTEAHLDELAAKGVKKLLVMCPAFVADCIETLEEIGDRGAEQFKEAGGEELILIPCLNDDPNWAKELNRLCERAPLML.

Fe cation is bound by residues His-189 and Glu-292.

This sequence belongs to the ferrochelatase family.

It localises to the cytoplasm. It catalyses the reaction heme b + 2 H(+) = protoporphyrin IX + Fe(2+). It functions in the pathway porphyrin-containing compound metabolism; protoheme biosynthesis; protoheme from protoporphyrin-IX: step 1/1. In terms of biological role, catalyzes the ferrous insertion into protoporphyrin IX. This is Ferrochelatase from Pseudomonas syringae pv. syringae (strain B728a).